A 21-amino-acid chain; its full sequence is TKIADLRSQTVDQLSDXLXKL.

Belongs to the universal ribosomal protein uL29 family.

In Brevundimonas diminuta (Pseudomonas diminuta), this protein is Large ribosomal subunit protein uL29 (rpmC).